The chain runs to 136 residues: Histone H3.1/H3.2 (136 aa).

The disordered stretch occupies residues 1–42; sequence MARTKQTARKSTGGKAPRKQLASKAARKAAPATGGVKKPHRY. Lysine 5 is modified (N6,N6,N6-trimethyllysine; alternate). Lysine 5 is subject to N6,N6-dimethyllysine; alternate. Residues lysine 5 and lysine 10 each carry the N6-methyllysine; alternate modification. The residue at position 10 (lysine 10) is an N6-acetyllysine; alternate. At serine 11 the chain carries Phosphoserine. Lysine 15 bears the N6,N6-dimethyllysine; alternate mark. 5 positions are modified to N6-acetyllysine; alternate: lysine 15, lysine 19, lysine 24, lysine 28, and lysine 37. 4 positions are modified to N6-methyllysine; alternate: lysine 19, lysine 24, lysine 28, and lysine 37. Low complexity predominate over residues 19–32; that stretch reads KQLASKAARKAAPA. N6,N6,N6-trimethyllysine; alternate is present on residues lysine 28 and lysine 37. N6,N6-dimethyllysine; alternate occurs at positions 28 and 37. 2 positions are modified to N6-acetyllysine: lysine 57 and lysine 65. Lysine 80 is subject to N6,N6,N6-trimethyllysine; alternate. Lysine 80 is subject to N6,N6-dimethyllysine; alternate. An N6-methyllysine; alternate modification is found at lysine 80.

This sequence belongs to the histone H3 family. In terms of assembly, the nucleosome is a histone octamer containing two molecules each of H2A, H2B, H3 and H4 assembled in one H3-H4 heterotetramer and two H2A-H2B heterodimers. The octamer wraps approximately 147 bp of DNA. Phosphorylated by ark1 to form H3S10ph in a cell cycle-dependent manner during mitosis and meiosis. H3S10ph is also formed by ssp2, promotes subsequent H3K14ac formation by gcn5, and is required for transcriptional activation through TBP recruitment to the promoters. Dephosphorylation is performed by sds21. In terms of processing, mono-, di- and trimethylated by the COMPASS complex to form H3K4me1/2/3. H3K4me activates gene expression by regulating transcription elongation and plays a role in telomere length maintenance. H3K4me enrichment correlates with transcription levels, and occurs in a 5' to 3' gradient with H3K4me3 enrichment at the 5'-end of genes, shifting to H3K4me2 and then H3K4me1. Methylated by clr4 to form H3K9me1. H3K9me1 represents a specific tag for epigenetic transcriptional repression by recruiting swi6/HP1 to methylated histones. Targeting to histone probably involves clr3 and rik1. Essential for silencing of centromeres and directional switching of the mating type. Methylated by set2 to form H3K36me. H3K36me represses gene expression. Methylated by dot1 to form H3K79me. H3K79me is required for association of SIR proteins with telomeric regions and for telomeric silencing. The COMPASS-mediated formation of H3K4me2/3 and the dot1-mediated formation of H3K79me require H2BK123ub1. Post-translationally, acetylation of histone H3 leads to transcriptional activation. H3K14ac formation by gcn5 is promoted by H3S10ph. H3K14ac can also be formed by esa1. H3K56ac formation occurs predominantly in newly synthesized H3 molecules during G1, S and G2/M of the cell cycle and may be involved in DNA repair.

Its subcellular location is the nucleus. The protein resides in the chromosome. In terms of biological role, core component of nucleosome. Nucleosomes wrap and compact DNA into chromatin, limiting DNA accessibility to the cellular machineries which require DNA as a template. Histones thereby play a central role in transcription regulation, DNA repair, DNA replication and chromosomal stability. DNA accessibility is regulated via a complex set of post-translational modifications of histones, also called histone code, and nucleosome remodeling. In Schizosaccharomyces pombe (strain 972 / ATCC 24843) (Fission yeast), this protein is Histone H3.1/H3.2 (hht1).